We begin with the raw amino-acid sequence, 522 residues long: Biotin-dependent long chain acyl-coenzyme A carboxylase beta4 subunit (522 aa).

The region spanning 11-261 (TAEKLAELRE…NCFDKPPVVN (251 aa)) is the CoA carboxyltransferase N-terminal domain. The CoA carboxyltransferase C-terminal domain occupies 270-503 (GHDLELDSIV…RLLLRKSMHL (234 aa)).

This sequence belongs to the AccD/PCCB family. As to quaternary structure, the biotin-dependent long-chain acyl-CoA carboxylase (LCC) complex is composed of AccA3, which contains the biotin carboxylase (BC) and biotin carboxyl carrier protein (BCCP) domains, and AccD4, which contains the carboxyl transferase (CT) domain. The complex also contains the beta5 subunit AccD5 and the epsilon subunit AccE5. The four subunits are essential for activity, but AccD5, together with AccE5, probably plays a structural role rather than a catalytic one.

In terms of biological role, component of a biotin-dependent acyl-CoA carboxylase complex. This subunit transfers the CO2 from carboxybiotin to the CoA ester substrate. When associated with the alpha3 subunit AccA3, the beta5 subunit AccD5 and the epsilon subunit AccE5, forms the LCC complex, which is involved in the carboxylation of long chain acyl-CoA. The LCC complex can use C16-C24 substrates, the highest specific activity is obtained with carboxy-C20-CoA. Has low activity with acetyl-CoA and propionyl-CoA. This Mycobacterium tuberculosis (strain ATCC 25618 / H37Rv) protein is Biotin-dependent long chain acyl-coenzyme A carboxylase beta4 subunit.